Reading from the N-terminus, the 519-residue chain is ATP synthase subunit alpha (519 aa).

ATP is bound at residue 175 to 182 (GDRQTGKT).

The protein belongs to the ATPase alpha/beta chains family. F-type ATPases have 2 components, CF(1) - the catalytic core - and CF(0) - the membrane proton channel. CF(1) has five subunits: alpha(3), beta(3), gamma(1), delta(1), epsilon(1). CF(0) has three main subunits: a(1), b(2) and c(9-12). The alpha and beta chains form an alternating ring which encloses part of the gamma chain. CF(1) is attached to CF(0) by a central stalk formed by the gamma and epsilon chains, while a peripheral stalk is formed by the delta and b chains.

It is found in the cell inner membrane. It carries out the reaction ATP + H2O + 4 H(+)(in) = ADP + phosphate + 5 H(+)(out). Its function is as follows. Produces ATP from ADP in the presence of a proton gradient across the membrane. The alpha chain is a regulatory subunit. The polypeptide is ATP synthase subunit alpha (Acinetobacter baylyi (strain ATCC 33305 / BD413 / ADP1)).